The sequence spans 264 residues: Anamorsin homolog 2 (264 aa).

The tract at residues Met1–Phe142 is N-terminal SAM-like domain. The interval Pro143–Leu174 is linker. [2Fe-2S] cluster-binding residues include Cys185, Cys194, Cys197, and Cys199. A fe-S binding site A region spans residues Cys185 to Cys199. The [4Fe-4S] cluster site is built by Cys225, Cys228, Cys236, and Cys239. Short sequence motifs (cx2C motif) lie at residues Cys225 to Cys228 and Cys236 to Cys239. Residues Cys225–Cys239 are fe-S binding site B.

The protein belongs to the anamorsin family. In terms of assembly, monomer. [2Fe-2S] cluster is required as a cofactor. The cofactor is [4Fe-4S] cluster.

It localises to the cytoplasm. Its subcellular location is the mitochondrion intermembrane space. Its function is as follows. Component of the cytosolic iron-sulfur (Fe-S) protein assembly (CIA) machinery. Required for the maturation of extramitochondrial Fe-S proteins. Part of an electron transfer chain functioning in an early step of cytosolic Fe-S biogenesis, facilitating the de novo assembly of a [4Fe-4S] cluster on the cytosolic Fe-S scaffold complex. Electrons are transferred from NADPH via a FAD- and FMN-containing diflavin oxidoreductase. Together with the diflavin oxidoreductase, also required for the assembly of the diferric tyrosyl radical cofactor of ribonucleotide reductase (RNR), probably by providing electrons for reduction during radical cofactor maturation in the catalytic small subunit. In Oryza sativa subsp. japonica (Rice), this protein is Anamorsin homolog 2.